A 492-amino-acid chain; its full sequence is MKKWWFNSMLSKGKGELEYRCWLSKSMESPGPIKNPSVSEELIRNDKNKNIHSSSDSDSSSYSKLAGVRDIHNFISDDTFFVKDSNRDSYSIYFDIENQILELDNAHSFLSELESSFYSFRNYSSRNNGSKSADPDSDRYMYDTKSSWNNHIHNCLDSYLHSQICIDSHVLSSSDNYSASYIYNFICSESESSNIQSSTNGSDLTISESSNESESSNESDVTQKYRHLWVQCENCYGLNYKKFLKSKMYLCEQCGYHLKMISSDRIDLLVDPGTWDPMDDDMVSIDPIEFDSEEEPYKNRIDSYQSKTGLTEAVQTGTGQLNGIPIAIGVMDFQFMGGSMGSVVGEKITRLIEYAANKFLPLLLVCASGGARMQEGSLSLMQMAKISSALYDYQSNKKLFYVSILTSPTTGGVTASFGMLGDIIIAEPNAYIAFAGKRVIEQTLNKTVPEGSQEAEYLFDKGLFDPIVPRNPLKGVLSELFLFHGRFPLNQN.

The tract at residues 198-219 (STNGSDLTISESSNESESSNES) is disordered. The region spanning 228–492 (LWVQCENCYG…FHGRFPLNQN (265 aa)) is the CoA carboxyltransferase N-terminal domain. Zn(2+) is bound by residues C232, C235, C251, and C254. Residues 232–254 (CENCYGLNYKKFLKSKMYLCEQC) form a C4-type zinc finger.

This sequence belongs to the AccD/PCCB family. Acetyl-CoA carboxylase is a heterohexamer composed of biotin carboxyl carrier protein, biotin carboxylase and 2 subunits each of ACCase subunit alpha and ACCase plastid-coded subunit beta (accD). It depends on Zn(2+) as a cofactor.

The protein resides in the plastid. The protein localises to the chloroplast stroma. It catalyses the reaction N(6)-carboxybiotinyl-L-lysyl-[protein] + acetyl-CoA = N(6)-biotinyl-L-lysyl-[protein] + malonyl-CoA. It participates in lipid metabolism; malonyl-CoA biosynthesis; malonyl-CoA from acetyl-CoA: step 1/1. In terms of biological role, component of the acetyl coenzyme A carboxylase (ACC) complex. Biotin carboxylase (BC) catalyzes the carboxylation of biotin on its carrier protein (BCCP) and then the CO(2) group is transferred by the transcarboxylase to acetyl-CoA to form malonyl-CoA. This chain is Acetyl-coenzyme A carboxylase carboxyl transferase subunit beta, chloroplastic, found in Citrus sinensis (Sweet orange).